A 416-amino-acid polypeptide reads, in one-letter code: Venom allergen 5 (416 aa).

The N-terminal stretch at 1–24 (MKGILLLFLKLVVLFVYLCSSVLS) is a signal peptide. An SCP domain is found at 57-217 (DDRNTIINLH…NYGPAGNLDD (161 aa)). Arginine amide; in Cryptide Pep-4 is present on Arg-82.

Belongs to the CRISP family. Venom allergen 5-like subfamily. Contains 9 disulfide bonds. Expressed by the venom gland.

Its subcellular location is the secreted. In terms of biological role, presents weak lactate dehydrogenase (LDH) release from mast cells. Does not induce hemolytic activity, mast cell degranulation, and antimicrobial effects. In vivo, injection into mice causes moderate edema formation, but induces very weak or no change in nociceptive sensibility. It also causes an alteration in rearing (standing on hind limbs), but does not impact locomotion. This chain is Venom allergen 5, found in Tityus serrulatus (Brazilian scorpion).